The primary structure comprises 357 residues: Cobalt-precorrin-5B C(1)-methyltransferase (357 aa).

It belongs to the CbiD family.

It catalyses the reaction Co-precorrin-5B + S-adenosyl-L-methionine = Co-precorrin-6A + S-adenosyl-L-homocysteine. It functions in the pathway cofactor biosynthesis; adenosylcobalamin biosynthesis; cob(II)yrinate a,c-diamide from sirohydrochlorin (anaerobic route): step 6/10. Its function is as follows. Catalyzes the methylation of C-1 in cobalt-precorrin-5B to form cobalt-precorrin-6A. The chain is Cobalt-precorrin-5B C(1)-methyltransferase from Paramagnetospirillum magneticum (strain ATCC 700264 / AMB-1) (Magnetospirillum magneticum).